The following is a 329-amino-acid chain: DNA-directed RNA polymerase subunit alpha (329 aa).

Residues 1–235 (MQGSVTEFLK…EQLEAFVDLR (235 aa)) form an alpha N-terminal domain (alpha-NTD) region. The segment at 249 to 329 (FDPILLRPVD…NWPPASIADE (81 aa)) is alpha C-terminal domain (alpha-CTD).

The protein belongs to the RNA polymerase alpha chain family. In terms of assembly, homodimer. The RNAP catalytic core consists of 2 alpha, 1 beta, 1 beta' and 1 omega subunit. When a sigma factor is associated with the core the holoenzyme is formed, which can initiate transcription.

The catalysed reaction is RNA(n) + a ribonucleoside 5'-triphosphate = RNA(n+1) + diphosphate. DNA-dependent RNA polymerase catalyzes the transcription of DNA into RNA using the four ribonucleoside triphosphates as substrates. The protein is DNA-directed RNA polymerase subunit alpha of Sodalis glossinidius (strain morsitans).